Here is a 522-residue protein sequence, read N- to C-terminus: Maturase K (522 aa).

It belongs to the intron maturase 2 family. MatK subfamily.

It localises to the plastid. The protein localises to the chloroplast. Its function is as follows. Usually encoded in the trnK tRNA gene intron. Probably assists in splicing its own and other chloroplast group II introns. The sequence is that of Maturase K from Pillansia templemannii.